The following is a 147-amino-acid chain: UPF0735 ACT domain-containing protein RBAM_024960 (147 aa).

The 76-residue stretch at 70–145 folds into the ACT domain; the sequence is TLFFHLEDRS…FIEKVEILGS (76 aa).

This sequence belongs to the UPF0735 family.

In Bacillus velezensis (strain DSM 23117 / BGSC 10A6 / LMG 26770 / FZB42) (Bacillus amyloliquefaciens subsp. plantarum), this protein is UPF0735 ACT domain-containing protein RBAM_024960.